We begin with the raw amino-acid sequence, 307 residues long: Leucine-rich repeat-containing protein 59 (307 aa).

Position 1 is an N-acetylmethionine (Met1). Thr2 is modified (N-acetylthreonine; in Leucine-rich repeat-containing protein 59, N-terminally processed). At 2–244 the chain is on the cytoplasmic side; sequence TKAGSKGGNL…KPPPRKHTRS (243 aa). 5 LRR repeats span residues 10–31, 40–62, 63–84, 86–107, and 109–128; these read NLRDKLDGNELDLSLSDLNEVP, KATVLDLSCNKLSTLPSDFCGLT, HLVKLDLSKNKLQQLPADFGRL, NLQHLDLLNNRLVTLPVSFAQL, and NLKWLDLKDNPLDPVLAKVA. Phosphoserine is present on residues Ser23 and Ser25. An N6-succinyllysine modification is found at Lys73. The residue at position 135 (Lys135) is an N6-acetyllysine. Residues 148–216 adopt a coiled-coil conformation; the sequence is MKAVQADQER…KASKREQEKK (69 aa). A disordered region spans residues 150-241; that stretch reads AVQADQERER…RPRKPPPRKH (92 aa). Residues 154-221 show a composition bias toward basic and acidic residues; the sequence is DQERERQRRL…EQEKKPKKEA (68 aa). Basic residues predominate over residues 229–241; that stretch reads SGSRPRKPPPRKH. A helical transmembrane segment spans residues 245–265; it reads WAVLKVLLLLLLLCVAGGLVV. Residues 266–307 are Lumenal-facing; sequence CRVTGLHQQPLCTSVNTIYDNAVQGLRHHEILQWVLQTDSQQ.

As to quaternary structure, can form homodimers. Interacts with SGO1. Interacts with FGF1.

The protein resides in the microsome membrane. It localises to the endoplasmic reticulum membrane. It is found in the nucleus envelope. In terms of biological role, required for nuclear import of FGF1, but not that of FGF2. Might regulate nuclear import of exogenous FGF1 by facilitating interaction with the nuclear import machinery and by transporting cytosolic FGF1 to, and possibly through, the nuclear pores. This Mus musculus (Mouse) protein is Leucine-rich repeat-containing protein 59 (Lrrc59).